Here is a 921-residue protein sequence, read N- to C-terminus: Protein translocase subunit SecA (921 aa).

ATP is bound by residues glutamine 87, 105–109 (GEGKT), and aspartate 515. The disordered stretch occupies residues 575–594 (RRIDNQLRGRSGRQGDPGSS). Cysteine 905, cysteine 907, cysteine 916, and cysteine 917 together coordinate Zn(2+).

The protein belongs to the SecA family. In terms of assembly, monomer and homodimer. Part of the essential Sec protein translocation apparatus which comprises SecA, SecYEG and auxiliary proteins SecDF-YajC and YidC. The cofactor is Zn(2+).

It localises to the cell inner membrane. Its subcellular location is the cytoplasm. The enzyme catalyses ATP + H2O + cellular proteinSide 1 = ADP + phosphate + cellular proteinSide 2.. Functionally, part of the Sec protein translocase complex. Interacts with the SecYEG preprotein conducting channel. Has a central role in coupling the hydrolysis of ATP to the transfer of proteins into and across the cell membrane, serving both as a receptor for the preprotein-SecB complex and as an ATP-driven molecular motor driving the stepwise translocation of polypeptide chains across the membrane. The polypeptide is Protein translocase subunit SecA (Polynucleobacter necessarius subsp. necessarius (strain STIR1)).